Reading from the N-terminus, the 245-residue chain is 2,3-bisphosphoglycerate-dependent phosphoglycerate mutase (245 aa).

Residues 8-15 (RHGQSLWN), 21-22 (TG), Arg-60, 87-90 (ERHY), Lys-98, 114-115 (RR), and 183-184 (GN) each bind substrate. His-9 serves as the catalytic Tele-phosphohistidine intermediate. Glu-87 functions as the Proton donor/acceptor in the catalytic mechanism.

The protein belongs to the phosphoglycerate mutase family. BPG-dependent PGAM subfamily.

The enzyme catalyses (2R)-2-phosphoglycerate = (2R)-3-phosphoglycerate. The protein operates within carbohydrate degradation; glycolysis; pyruvate from D-glyceraldehyde 3-phosphate: step 3/5. Catalyzes the interconversion of 2-phosphoglycerate and 3-phosphoglycerate. The polypeptide is 2,3-bisphosphoglycerate-dependent phosphoglycerate mutase (Bacillus cytotoxicus (strain DSM 22905 / CIP 110041 / 391-98 / NVH 391-98)).